A 289-amino-acid polypeptide reads, in one-letter code: Protoheme IX farnesyltransferase (289 aa).

9 helical membrane passes run Val18–Pro38, Gly40–Phe60, Val87–Val107, Leu111–Phe131, Asn139–Gly159, Ser168–Leu188, Ser212–Ser232, Met234–Tyr254, and Phe269–Ile289.

Belongs to the UbiA prenyltransferase family. Protoheme IX farnesyltransferase subfamily.

Its subcellular location is the cell inner membrane. It carries out the reaction heme b + (2E,6E)-farnesyl diphosphate + H2O = Fe(II)-heme o + diphosphate. The protein operates within porphyrin-containing compound metabolism; heme O biosynthesis; heme O from protoheme: step 1/1. Its function is as follows. Converts heme B (protoheme IX) to heme O by substitution of the vinyl group on carbon 2 of heme B porphyrin ring with a hydroxyethyl farnesyl side group. This chain is Protoheme IX farnesyltransferase, found in Leptospira interrogans serogroup Icterohaemorrhagiae serovar copenhageni (strain Fiocruz L1-130).